We begin with the raw amino-acid sequence, 50 residues long: uncharacterized protein (50 aa).

The chain crosses the membrane as a helical span at residues 5–19; that stretch reads IIIIVIVIIIFFFYL. A coiled-coil region spans residues 19-50; that stretch reads LKQKKLTNCETQVVKVQKDIDEINLKLKKLNK.

The protein localises to the membrane. This is an uncharacterized protein from Acheta domesticus (House cricket).